The primary structure comprises 449 residues: Phosphomannomutase (449 aa).

The active-site Phosphoserine intermediate is S97. Mg(2+)-binding residues include S97, D237, D239, and D241.

This sequence belongs to the phosphohexose mutase family. Mg(2+) is required as a cofactor.

The catalysed reaction is alpha-D-mannose 1-phosphate = D-mannose 6-phosphate. The protein operates within amino-acid biosynthesis. Catalyzes the formation of mannose-1-P from mannose-6-P. Can also use glucose-6-P. The sequence is that of Phosphomannomutase (manB) from Methanocaldococcus jannaschii (strain ATCC 43067 / DSM 2661 / JAL-1 / JCM 10045 / NBRC 100440) (Methanococcus jannaschii).